Reading from the N-terminus, the 658-residue chain is Threonine--tRNA ligase (658 aa).

Residues 1-61 (MIELVFPDGS…EKGGAFKILT (61 aa)) enclose the TGS domain. A catalytic region spans residues 243 to 535 (DHRKLGRQMD…LIENYAGAFP (293 aa)). Residues Cys335, His386, and His512 each coordinate Zn(2+).

It belongs to the class-II aminoacyl-tRNA synthetase family. In terms of assembly, homodimer. Requires Zn(2+) as cofactor.

It is found in the cytoplasm. It carries out the reaction tRNA(Thr) + L-threonine + ATP = L-threonyl-tRNA(Thr) + AMP + diphosphate + H(+). Its function is as follows. Catalyzes the attachment of threonine to tRNA(Thr) in a two-step reaction: L-threonine is first activated by ATP to form Thr-AMP and then transferred to the acceptor end of tRNA(Thr). Also edits incorrectly charged L-seryl-tRNA(Thr). This is Threonine--tRNA ligase from Phenylobacterium zucineum (strain HLK1).